The primary structure comprises 740 residues: Isocitrate dehydrogenase [NADP] 2 (740 aa).

NADP(+) is bound by residues Asn83 and Ser85. D-threo-isocitrate contacts are provided by Ser130, Asn133, Arg137, Arg143, and Lys253. An NADP(+)-binding site is contributed by Asn133. Asp348 is a Mg(2+) binding site. Residues Tyr418 and Arg546 each contribute to the D-threo-isocitrate site. The Mg(2+) site is built by Asp547 and Asp551. Residues Ser584, His588, Arg599, Asp601, and Arg648 each coordinate NADP(+).

Belongs to the monomeric-type IDH family. Monomer. Requires Mg(2+) as cofactor. The cofactor is Mn(2+).

It catalyses the reaction D-threo-isocitrate + NADP(+) = 2-oxoglutarate + CO2 + NADPH. IDH activity is not significantly affected by monovalent cations. The combined addition of Mn(2+) and another divalent cation results in the decrease of the activity. Its function is as follows. Catalyzes the oxidative decarboxylation of isocitrate to 2-oxoglutarate and carbon dioxide with the concomitant reduction of NADP(+). Cannot use NAD(+). In Psychrobacter sp. (strain 13A), this protein is Isocitrate dehydrogenase [NADP] 2.